The chain runs to 43 residues: Disintegrin CV (43 aa).

4 cysteine pairs are disulfide-bonded: Cys-1–Cys-10, Cys-6–Cys-29, Cys-7–Cys-34, and Cys-19–Cys-36. The 43-residue stretch at 1 to 43 folds into the Disintegrin domain; sequence CTTGPCCRQCKLKPAGTTCWRTSVSSHYCTGRSCECPSYPGNG. The Cell attachment site; atypical (RTS) signature appears at 21 to 23; that stretch reads RTS.

It belongs to the disintegrin family. Short disintegrin subfamily. As to quaternary structure, monomer. As to expression, expressed by the venom gland.

Its subcellular location is the secreted. In terms of biological role, specifically interacts with the alpha-1/beta-1 integrin (ITGA1/ITGB1). Exhibits highly inhibitory effects on cell adhesion and cell migration to collagens I and IV. Also shows in vivo anti-angiogenic activity. The polypeptide is Disintegrin CV (Cerastes vipera (Sahara sand viper)).